A 256-amino-acid chain; its full sequence is Enolase-phosphatase E1 (256 aa).

Mg(2+) contacts are provided by Asp-14 and Glu-16. Residues 142-143 and Lys-176 each bind substrate; that span reads SS. Position 201 (Asp-201) interacts with Mg(2+).

It belongs to the HAD-like hydrolase superfamily. MasA/MtnC family. Monomer. The cofactor is Mg(2+).

The protein localises to the cytoplasm. It localises to the nucleus. It carries out the reaction 5-methylsulfanyl-2,3-dioxopentyl phosphate + H2O = 1,2-dihydroxy-5-(methylsulfanyl)pent-1-en-3-one + phosphate. Its pathway is amino-acid biosynthesis; L-methionine biosynthesis via salvage pathway; L-methionine from S-methyl-5-thio-alpha-D-ribose 1-phosphate: step 3/6. The protein operates within amino-acid biosynthesis; L-methionine biosynthesis via salvage pathway; L-methionine from S-methyl-5-thio-alpha-D-ribose 1-phosphate: step 4/6. Its function is as follows. Bifunctional enzyme that catalyzes the enolization of 2,3-diketo-5-methylthiopentyl-1-phosphate (DK-MTP-1-P) into the intermediate 2-hydroxy-3-keto-5-methylthiopentenyl-1-phosphate (HK-MTPenyl-1-P), which is then dephosphorylated to form the acireductone 1,2-dihydroxy-3-keto-5-methylthiopentene (DHK-MTPene). This is Enolase-phosphatase E1 from Drosophila melanogaster (Fruit fly).